The chain runs to 314 residues: Ribosomal protein L11 methyltransferase (314 aa).

Positions 161, 182, 204, and 248 each coordinate S-adenosyl-L-methionine.

Belongs to the methyltransferase superfamily. PrmA family.

It is found in the cytoplasm. The enzyme catalyses L-lysyl-[protein] + 3 S-adenosyl-L-methionine = N(6),N(6),N(6)-trimethyl-L-lysyl-[protein] + 3 S-adenosyl-L-homocysteine + 3 H(+). Methylates ribosomal protein L11. In Listeria monocytogenes serotype 4a (strain HCC23), this protein is Ribosomal protein L11 methyltransferase.